A 777-amino-acid polypeptide reads, in one-letter code: Mediator of RNA polymerase II transcription subunit 15 (777 aa).

Disordered stretches follow at residues 120–139 and 418–520; these read MNLP…HGIT and SIPV…EEQQ. The segment covering 420-434 has biased composition (low complexity); that stretch reads PVMSSPSPVQQVQTP. The segment covering 435–448 has biased composition (pro residues); that stretch reads QPMPPPPQPSPQPS. A compositionally biased stretch (low complexity) spans 449 to 471; that stretch reads QPMSQPNSNVSSGPAPSPSSFMP. A compositionally biased stretch (polar residues) spans 500-519; the sequence is TPGNPNSVMSPASNNQSEEQ.

This sequence belongs to the Mediator complex subunit 15 family. In terms of assembly, component of the Mediator complex. Interacts with srebf1 and srebf2. Interacts with smad2, smad3 and smad4.

It localises to the cytoplasm. It is found in the nucleus. In terms of biological role, component of the Mediator complex, a coactivator involved in the regulated transcription of nearly all RNA polymerase II-dependent genes. Mediator functions as a bridge to convey information from gene-specific regulatory proteins to the basal RNA polymerase II transcription machinery. Mediator is recruited to promoters by direct interactions with regulatory proteins and serves as a scaffold for the assembly of a functional preinitiation complex with RNA polymerase II and the general transcription factors. Required for cholesterol-dependent gene regulation. Positively regulates the Nodal signaling pathway. This Xenopus laevis (African clawed frog) protein is Mediator of RNA polymerase II transcription subunit 15 (med15).